Reading from the N-terminus, the 371-residue chain is Protein lifeguard 1 (371 aa).

Residues 1 to 145 (MSHEKSFLVS…EGPPSYYDNQ (145 aa)) form a disordered region. Positions 14–49 (YPPPNPGYPGGPQPPMPPYAQPPYPGAPYPQPPFQP) are enriched in pro residues. A compositionally biased stretch (low complexity) spans 84 to 98 (YPQEGYPQGPYPQGG). Residues 102–114 (GPYPQSPFPPNPY) show a composition bias toward pro residues. The next 7 helical transmembrane spans lie at 165 to 185 (VFLVLTLQLSVTLSTVSVFTF), 197 to 217 (VWTYYVSYAVFFISLIVLSCC), 228 to 248 (LVALSVLTASLSYMVGMIASF), 253 to 273 (AVIMAVGITTAVCFTVVIFSM), 283 to 303 (MGVLLVSMVVLFIFAILCIFI), 307 to 327 (ILEIVYASLGALLFTCFLAVD), and 346 to 366 (FAALNLYTDIINIFLYILTII).

Belongs to the BI1 family. LFG subfamily.

Its subcellular location is the membrane. Its function is as follows. Potential apoptotic regulator. This Homo sapiens (Human) protein is Protein lifeguard 1 (GRINA).